The following is a 195-amino-acid chain: E3 ubiquitin-protein ligase ZNRF1 (195 aa).

Residues 1–10 (MGGKQSSASR) are compositionally biased toward polar residues. A disordered region spans residues 1–37 (MGGKQSSASRSRAPFPGVSSDDSAVPPSSNFGHFRGG). The N-myristoyl glycine moiety is linked to residue glycine 2. Residues 18–29 (VSSDDSAVPPSS) show a composition bias toward low complexity. An RING-type; atypical zinc finger spans residues 152 to 193 (CVICLEELSQGDTIARLPCLCIYHKSCIDSWFEVNRCCPEHP).

It localises to the endosome. The protein resides in the lysosome. Its subcellular location is the membrane. The catalysed reaction is S-ubiquitinyl-[E2 ubiquitin-conjugating enzyme]-L-cysteine + [acceptor protein]-L-lysine = [E2 ubiquitin-conjugating enzyme]-L-cysteine + N(6)-ubiquitinyl-[acceptor protein]-L-lysine.. The protein operates within protein modification; protein ubiquitination. Functionally, E3 ubiquitin-protein ligase that plays a role in neuron cells differentiation. Plays a role in the establishment and maintenance of neuronal transmission and plasticity. The chain is E3 ubiquitin-protein ligase ZNRF1 (znrf1) from Xenopus laevis (African clawed frog).